The following is a 138-amino-acid chain: Small ribosomal subunit protein uS11c (138 aa).

The segment at 1–23 (MAKPIPRIGSRRNGRISSRKSTR) is disordered. Residues 9-23 (GSRRNGRISSRKSTR) are compositionally biased toward basic residues.

This sequence belongs to the universal ribosomal protein uS11 family. In terms of assembly, part of the 30S ribosomal subunit.

Its subcellular location is the plastid. It is found in the chloroplast. The chain is Small ribosomal subunit protein uS11c from Cucumis sativus (Cucumber).